The sequence spans 35 residues: Jingzhaotoxin F6-27.63 (35 aa).

Cystine bridges form between Cys-2–Cys-17, Cys-9–Cys-22, and Cys-16–Cys-29.

Belongs to the neurotoxin 10 (Hwtx-1) family. 49 (Jztx-F6) subfamily. Expressed by the venom gland.

Its subcellular location is the secreted. Probable ion channel inhibitor. The protein is Jingzhaotoxin F6-27.63 of Chilobrachys guangxiensis (Chinese earth tiger tarantula).